The chain runs to 139 residues: Nucleoside diphosphate kinase (139 aa).

The ATP site is built by Lys-11, Phe-59, Arg-87, Thr-93, Arg-104, and Asn-114. Residue His-117 is the Pros-phosphohistidine intermediate of the active site.

It belongs to the NDK family. Homotetramer. Mg(2+) is required as a cofactor.

The protein resides in the cytoplasm. It catalyses the reaction a 2'-deoxyribonucleoside 5'-diphosphate + ATP = a 2'-deoxyribonucleoside 5'-triphosphate + ADP. It carries out the reaction a ribonucleoside 5'-diphosphate + ATP = a ribonucleoside 5'-triphosphate + ADP. Its function is as follows. Major role in the synthesis of nucleoside triphosphates other than ATP. The ATP gamma phosphate is transferred to the NDP beta phosphate via a ping-pong mechanism, using a phosphorylated active-site intermediate. In Pasteurella multocida (strain Pm70), this protein is Nucleoside diphosphate kinase.